A 432-amino-acid polypeptide reads, in one-letter code: Trigger factor (432 aa).

A PPIase FKBP-type domain is found at 161-246 (GKRVSIDFVG…VNKVEARQLP (86 aa)).

This sequence belongs to the FKBP-type PPIase family. Tig subfamily.

It localises to the cytoplasm. It carries out the reaction [protein]-peptidylproline (omega=180) = [protein]-peptidylproline (omega=0). In terms of biological role, involved in protein export. Acts as a chaperone by maintaining the newly synthesized protein in an open conformation. Functions as a peptidyl-prolyl cis-trans isomerase. This is Trigger factor from Vibrio vulnificus (strain CMCP6).